We begin with the raw amino-acid sequence, 274 residues long: Bis(5'-nucleosyl)-tetraphosphatase, symmetrical (274 aa).

This sequence belongs to the Ap4A hydrolase family.

It catalyses the reaction P(1),P(4)-bis(5'-adenosyl) tetraphosphate + H2O = 2 ADP + 2 H(+). Its function is as follows. Hydrolyzes diadenosine 5',5'''-P1,P4-tetraphosphate to yield ADP. This chain is Bis(5'-nucleosyl)-tetraphosphatase, symmetrical, found in Shewanella sp. (strain MR-4).